The primary structure comprises 375 residues: Zinc finger CCCH domain-containing protein 57 (375 aa).

C3H1-type zinc fingers lie at residues 42–70, 87–115, 133–161, 243–271, and 289–317; these read RHGE…HPHD, RIGQ…HPRN, RPNE…HPQT, RPGQ…HPRD, and RPGE…HPMR. The interval 352 to 375 is disordered; sequence SVEAKPTSLPETTSAKDTIVDAQH.

The protein resides in the nucleus. This Arabidopsis thaliana (Mouse-ear cress) protein is Zinc finger CCCH domain-containing protein 57 (ZFN3).